A 410-amino-acid polypeptide reads, in one-letter code: Peptidase T (410 aa).

His79 is a Zn(2+) binding site. The active site involves Asp81. Asp142 contributes to the Zn(2+) binding site. Glu176 acts as the Proton acceptor in catalysis. Zn(2+) is bound by residues Glu177, Asp199, and His381.

Belongs to the peptidase M20B family. It depends on Zn(2+) as a cofactor.

The protein localises to the cytoplasm. The catalysed reaction is Release of the N-terminal residue from a tripeptide.. Cleaves the N-terminal amino acid of tripeptides. The polypeptide is Peptidase T (Geobacillus sp. (strain WCH70)).